We begin with the raw amino-acid sequence, 208 residues long: Imidazole glycerol phosphate synthase subunit HisH (208 aa).

Positions 1 to 206 (MIVIIDYDTG…KEVIRSCKSS (206 aa)) constitute a Glutamine amidotransferase type-1 domain. Residue Cys-79 is the Nucleophile of the active site. Residues His-181 and Glu-183 contribute to the active site.

As to quaternary structure, heterodimer of HisH and HisF.

The protein resides in the cytoplasm. The enzyme catalyses 5-[(5-phospho-1-deoxy-D-ribulos-1-ylimino)methylamino]-1-(5-phospho-beta-D-ribosyl)imidazole-4-carboxamide + L-glutamine = D-erythro-1-(imidazol-4-yl)glycerol 3-phosphate + 5-amino-1-(5-phospho-beta-D-ribosyl)imidazole-4-carboxamide + L-glutamate + H(+). It catalyses the reaction L-glutamine + H2O = L-glutamate + NH4(+). The protein operates within amino-acid biosynthesis; L-histidine biosynthesis; L-histidine from 5-phospho-alpha-D-ribose 1-diphosphate: step 5/9. Its function is as follows. IGPS catalyzes the conversion of PRFAR and glutamine to IGP, AICAR and glutamate. The HisH subunit catalyzes the hydrolysis of glutamine to glutamate and ammonia as part of the synthesis of IGP and AICAR. The resulting ammonia molecule is channeled to the active site of HisF. This is Imidazole glycerol phosphate synthase subunit HisH from Listeria welshimeri serovar 6b (strain ATCC 35897 / DSM 20650 / CCUG 15529 / CIP 8149 / NCTC 11857 / SLCC 5334 / V8).